Here is a 790-residue protein sequence, read N- to C-terminus: Penicillin-binding protein 1A (790 aa).

At 1–6 (MYKSLL) the chain is on the cytoplasmic side. The helical; Signal-anchor for type II membrane protein transmembrane segment at 7–27 (FCLKIFVFLILVGCGITAYII) threads the bilayer. The Periplasmic segment spans residues 28 to 790 (YHYSRDLPDY…SKEDQSQEIY (763 aa)). Positions 49–220 (TRIYSRDGKL…SELNPERNYA (172 aa)) are transglycosylase. The active-site Proton donor; for transglycosylase activity is E87. The segment at 398–711 (DVIVVEAIKE…SNVVLPIFID (314 aa)) is transpeptidase. S457 serves as the catalytic Acyl-ester intermediate; for transpeptidase activity.

This sequence in the N-terminal section; belongs to the glycosyltransferase 51 family. In the C-terminal section; belongs to the transpeptidase family.

The protein localises to the cell inner membrane. The catalysed reaction is [GlcNAc-(1-&gt;4)-Mur2Ac(oyl-L-Ala-gamma-D-Glu-L-Lys-D-Ala-D-Ala)](n)-di-trans,octa-cis-undecaprenyl diphosphate + beta-D-GlcNAc-(1-&gt;4)-Mur2Ac(oyl-L-Ala-gamma-D-Glu-L-Lys-D-Ala-D-Ala)-di-trans,octa-cis-undecaprenyl diphosphate = [GlcNAc-(1-&gt;4)-Mur2Ac(oyl-L-Ala-gamma-D-Glu-L-Lys-D-Ala-D-Ala)](n+1)-di-trans,octa-cis-undecaprenyl diphosphate + di-trans,octa-cis-undecaprenyl diphosphate + H(+). It carries out the reaction Preferential cleavage: (Ac)2-L-Lys-D-Ala-|-D-Ala. Also transpeptidation of peptidyl-alanyl moieties that are N-acyl substituents of D-alanine.. It participates in cell wall biogenesis; peptidoglycan biosynthesis. Cell wall formation. Synthesis of cross-linked peptidoglycan from the lipid intermediates. The enzyme has a penicillin-insensitive transglycosylase N-terminal domain (formation of linear glycan strands) and a penicillin-sensitive transpeptidase C-terminal domain (cross-linking of the peptide subunits). This Rickettsia conorii (strain ATCC VR-613 / Malish 7) protein is Penicillin-binding protein 1A (mrcA).